The primary structure comprises 870 residues: MOG interacting and ectopic P-granules protein 1 (870 aa).

Residues 1–244 are disordered; sequence MVTADETVLA…VPEEDNNEQA (244 aa). Residues 9-20 are compositionally biased toward polar residues; that stretch reads LATTTNTTSMSV. Basic and acidic residues predominate over residues 41-51; it reads EQLKAEQREVM. Acidic residues-rich tracts occupy residues 77–99, 129–142, and 203–214; these read EVIE…DENG, IEQD…EITE, and IELDDDDDDEIQ. 2 consecutive C2H2-type zinc fingers follow at residues 421–444 and 450–473; these read HRCD…ENLH and FQCT…FETH. A CCHC-type zinc finger spans residues 486–508; it reads YPCAICEEDFNFKGVREQHYKQC. Composition is skewed to polar residues over residues 673-688 and 695-708; these read LQAA…SQKT and KLVT…VGSS. Residues 673 to 708 form a disordered region; it reads LQAAVNSMRSQNSQKTPTHRSSKLVTTPSHATVGSS. 4 consecutive C2H2-type zinc fingers follow at residues 713-736, 753-776, 794-815, and 826-849; these read FVCE…QTTH, LACS…VMSH, GRCK…VADH, and YSCD…TSNH. The interval 847–870 is disordered; that stretch reads SNHPKGDKKTSTPAKKDDCITLDD. A compositionally biased stretch (basic and acidic residues) spans 850–870; it reads PKGDKKTSTPAKKDDCITLDD.

In terms of assembly, interacts with hda-1, let-418, lin-1, mog-1, mog-4, mog-5, mog-6, pie-1 and unc-98. Sumoylated. Expressed in somatic cells of embryos, the head, hypodermis and tail of larvae and the germline of adults, including oocytes but not mature sperm and spermatocytes.

Its subcellular location is the nucleus. Has a broad role in development, specifically in the genetic pathway SynMuvB that negatively regulates specification of the vulval cell fate. Required for fem-3 3'-UTR-mediated repression in the regulation of the sperm/oocyte switch. Acts by regulating the translation of fem-3 mRNA, by binding to its 3'-UTR. This chain is MOG interacting and ectopic P-granules protein 1, found in Caenorhabditis elegans.